We begin with the raw amino-acid sequence, 932 residues long: 2-oxoglutarate dehydrogenase E1 component (932 aa).

The protein belongs to the alpha-ketoglutarate dehydrogenase family. As to quaternary structure, homodimer. Part of the 2-oxoglutarate dehydrogenase (OGDH) complex composed of E1 (2-oxoglutarate dehydrogenase), E2 (dihydrolipoamide succinyltransferase) and E3 (dihydrolipoamide dehydrogenase); the complex contains multiple copies of the three enzymatic components (E1, E2 and E3). It depends on thiamine diphosphate as a cofactor.

The enzyme catalyses N(6)-[(R)-lipoyl]-L-lysyl-[protein] + 2-oxoglutarate + H(+) = N(6)-[(R)-S(8)-succinyldihydrolipoyl]-L-lysyl-[protein] + CO2. E1 component of the 2-oxoglutarate dehydrogenase (OGDH) complex which catalyzes the decarboxylation of 2-oxoglutarate, the first step in the conversion of 2-oxoglutarate to succinyl-CoA and CO(2). The sequence is that of 2-oxoglutarate dehydrogenase E1 component from Staphylococcus aureus (strain bovine RF122 / ET3-1).